A 162-amino-acid chain; its full sequence is MSLVKLESSDEKVFEIEKEIACMSVTIKNMIEDIGESDAPIPLPNVTSTILEKVLDYCRHHHQHPSPQGDDKKDEKRLDDIPPYDRDFCKVDQPTLFELILAANYLDIKPLLDVTCKTVANMIRGKTPEEIRKIFNIKNDFTPEEEEQIRKENEWCEDKGGN.

Position 2 is an N-acetylserine (Ser-2). The interval Ile-100–Asn-162 is interaction with the F-box domain of F-box proteins. Pro-143 is modified (4-hydroxyproline). A glycan (O-linked (GlcNAc...) hydroxyproline) is linked at Pro-143.

The protein belongs to the SKP1 family. Multiprotein complex (SCF) with cullin and F-box-containing protein. Capable of undergoing aggregation. In terms of processing, O-linked glycan consists of linear Gal-Gal-Fuc-Gal-GlcNAc. Post-translationally, not glycosylated in prespore cells. FpaA and fpaB seem to be identically glycosylated. Glycosylation is required for nuclear enrichment. In terms of processing, hydroxylated by phyA.

The protein resides in the cytoplasm. The protein localises to the nucleus. The sequence is that of SCF ubiquitin ligase complex protein SKP1b (fpaB-1) from Dictyostelium discoideum (Social amoeba).